Reading from the N-terminus, the 459-residue chain is Protein phosphatase 1M (459 aa).

Positions 1–10 are enriched in basic residues; the sequence is MSAGWFRRRF. The segment at 1-64 is disordered; the sequence is MSAGWFRRRF…SRPVRSPARG (64 aa). Over residues 14–27 the composition is skewed to pro residues; sequence EPLPAPRPPGPHAS. Over residues 38-48 the composition is skewed to low complexity; sequence RGSSSSPGAAD. Mn(2+) contacts are provided by aspartate 125 and glycine 126. One can recognise a PPM-type phosphatase domain in the interval 162 to 459; sequence MHLNGRCICP…HSQGQESSDH (298 aa).

This sequence belongs to the PP2C family. The cofactor is Mg(2+). Mn(2+) is required as a cofactor.

Its subcellular location is the nucleus. It catalyses the reaction O-phospho-L-seryl-[protein] + H2O = L-seryl-[protein] + phosphate. It carries out the reaction O-phospho-L-threonyl-[protein] + H2O = L-threonyl-[protein] + phosphate. The polypeptide is Protein phosphatase 1M (PPM1M) (Homo sapiens (Human)).